Here is a 600-residue protein sequence, read N- to C-terminus: Putative DNA 3'-5' helicase Rad25 (600 aa).

Residues 253–402 (VDRFEDASAG…DIYTLVGRPI (150 aa)) enclose the Helicase ATP-binding domain. 266 to 273 (GPPGSGKT) is a binding site for ATP. A DEAH box motif is present at residues 356–359 (DEVH). The region spanning 457–600 (EIEHLVDQHG…VTESDASHSP (144 aa)) is the Helicase C-terminal domain. The segment at 569–600 (RGTEEEDHARSRMRHLSTKGVRVTESDASHSP) is disordered. A compositionally biased stretch (basic and acidic residues) spans 590–600 (RVTESDASHSP).

The protein belongs to the helicase family. RAD25/XPB subfamily.

It carries out the reaction Couples ATP hydrolysis with the unwinding of duplex DNA by translocating in the 3'-5' direction.. The catalysed reaction is ATP + H2O = ADP + phosphate + H(+). The chain is Putative DNA 3'-5' helicase Rad25 from Halobacterium salinarum (strain ATCC 700922 / JCM 11081 / NRC-1) (Halobacterium halobium).